Consider the following 727-residue polypeptide: NADH-ubiquinone oxidoreductase 75 kDa subunit, mitochondrial (727 aa).

The N-terminal 23 residues, 1–23 (MLRIPVRKALVGLSKSSKGCVRT), are a transit peptide targeting the mitochondrion. Residues 30-108 (NLIEVFVDGQ…GWNILTNSEK (79 aa)) enclose the 2Fe-2S ferredoxin-type domain. [2Fe-2S] cluster is bound by residues Cys64, Cys75, and Cys78. Position 84 is an N6-acetyllysine (Lys84). A [2Fe-2S] cluster-binding site is contributed by Cys92. The 4Fe-4S His(Cys)3-ligated-type domain occupies 108-147 (KTKKAREGVMEFLLANHPLDCPICDQGGECDLQDQSMMFG). [4Fe-4S] cluster is bound by residues His124, Cys128, Cys131, Cys137, Cys176, Cys179, Cys182, and Cys226. The region spanning 245-301 (TRKTESIDVMDAVGSNIVVSTRTGEVMRILPRMHEDINEEWISDKTRFAYDGLKRQR) is the 4Fe-4S Mo/W bis-MGD-type domain. 2 positions are modified to N6-acetyllysine: Lys499 and Lys709.

It belongs to the complex I 75 kDa subunit family. As to quaternary structure, core subunit of respiratory chain NADH dehydrogenase (Complex I) which is composed of 45 different subunits. This is the largest subunit of complex I and it is a component of the iron-sulfur (IP) fragment of the enzyme. Complex I associates with ubiquinol-cytochrome reductase complex (Complex III) to form supercomplexes. Interacts with MDM2 and AKAP1. The cofactor is [2Fe-2S] cluster. Requires [4Fe-4S] cluster as cofactor.

The protein resides in the mitochondrion inner membrane. It catalyses the reaction a ubiquinone + NADH + 5 H(+)(in) = a ubiquinol + NAD(+) + 4 H(+)(out). Its function is as follows. Core subunit of the mitochondrial membrane respiratory chain NADH dehydrogenase (Complex I) which catalyzes electron transfer from NADH through the respiratory chain, using ubiquinone as an electron acceptor. Essential for catalysing the entry and efficient transfer of electrons within complex I. Plays a key role in the assembly and stability of complex I and participates in the association of complex I with ubiquinol-cytochrome reductase complex (Complex III) to form supercomplexes. This is NADH-ubiquinone oxidoreductase 75 kDa subunit, mitochondrial (NDUFS1) from Bos taurus (Bovine).